The sequence spans 250 residues: Ribonuclease HII (250 aa).

In terms of domain architecture, RNase H type-2 spans 66 to 250; the sequence is QLVAGVDEVG…SFAPVSEYEK (185 aa). The a divalent metal cation site is built by Asp-72, Glu-73, and Asp-164.

It belongs to the RNase HII family. The cofactor is Mn(2+). Requires Mg(2+) as cofactor.

The protein resides in the cytoplasm. It catalyses the reaction Endonucleolytic cleavage to 5'-phosphomonoester.. Endonuclease that specifically degrades the RNA of RNA-DNA hybrids. The polypeptide is Ribonuclease HII (Lactobacillus gasseri (strain ATCC 33323 / DSM 20243 / BCRC 14619 / CIP 102991 / JCM 1131 / KCTC 3163 / NCIMB 11718 / NCTC 13722 / AM63)).